A 278-amino-acid polypeptide reads, in one-letter code: 4-hydroxy-tetrahydrodipicolinate reductase (278 aa).

Residues 13–18 and 111–113 contribute to the NAD(+) site; these read GAAGKM and GTT. Catalysis depends on histidine 167, which acts as the Proton donor/acceptor. Histidine 168 lines the (S)-2,3,4,5-tetrahydrodipicolinate pocket. Lysine 171 acts as the Proton donor in catalysis. 177–178 provides a ligand contact to (S)-2,3,4,5-tetrahydrodipicolinate; it reads GT.

The protein belongs to the DapB family.

It is found in the cytoplasm. The enzyme catalyses (S)-2,3,4,5-tetrahydrodipicolinate + NAD(+) + H2O = (2S,4S)-4-hydroxy-2,3,4,5-tetrahydrodipicolinate + NADH + H(+). It catalyses the reaction (S)-2,3,4,5-tetrahydrodipicolinate + NADP(+) + H2O = (2S,4S)-4-hydroxy-2,3,4,5-tetrahydrodipicolinate + NADPH + H(+). Its pathway is amino-acid biosynthesis; L-lysine biosynthesis via DAP pathway; (S)-tetrahydrodipicolinate from L-aspartate: step 4/4. In terms of biological role, catalyzes the conversion of 4-hydroxy-tetrahydrodipicolinate (HTPA) to tetrahydrodipicolinate. The sequence is that of 4-hydroxy-tetrahydrodipicolinate reductase from Nostoc punctiforme (strain ATCC 29133 / PCC 73102).